A 641-amino-acid polypeptide reads, in one-letter code: Chaperone protein DnaK (641 aa).

Threonine 198 carries the phosphothreonine; by autocatalysis modification. Composition is skewed to basic and acidic residues over residues 514 to 529, 540 to 554, and 608 to 621; these read AEAN…EGVE, SSEK…KVSE, and AHAD…RSGD. Disordered stretches follow at residues 514 to 554 and 604 to 641; these read AEAN…KVSE and QTES…KRSA. Over residues 622 to 633 the composition is skewed to acidic residues; it reads DVVDADYEEVKD.

Belongs to the heat shock protein 70 family.

Acts as a chaperone. The polypeptide is Chaperone protein DnaK (Sinorhizobium medicae (strain WSM419) (Ensifer medicae)).